A 405-amino-acid polypeptide reads, in one-letter code: Formate-dependent phosphoribosylglycinamide formyltransferase (405 aa).

N(1)-(5-phospho-beta-D-ribosyl)glycinamide-binding positions include 27 to 28 (EL) and Glu87. Residues Arg120, Lys162, 167-172 (SSGKGQ), 202-205 (EGFI), and Glu210 contribute to the ATP site. The 196-residue stretch at 125–320 (RLAAETLGLP…EFELHARALL (196 aa)) folds into the ATP-grasp domain. Mg(2+) contacts are provided by Glu279 and Glu291. Residues Asp298, Lys367, and 374-375 (RR) contribute to the N(1)-(5-phospho-beta-D-ribosyl)glycinamide site.

It belongs to the PurK/PurT family. Homodimer.

It catalyses the reaction N(1)-(5-phospho-beta-D-ribosyl)glycinamide + formate + ATP = N(2)-formyl-N(1)-(5-phospho-beta-D-ribosyl)glycinamide + ADP + phosphate + H(+). It participates in purine metabolism; IMP biosynthesis via de novo pathway; N(2)-formyl-N(1)-(5-phospho-D-ribosyl)glycinamide from N(1)-(5-phospho-D-ribosyl)glycinamide (formate route): step 1/1. In terms of biological role, involved in the de novo purine biosynthesis. Catalyzes the transfer of formate to 5-phospho-ribosyl-glycinamide (GAR), producing 5-phospho-ribosyl-N-formylglycinamide (FGAR). Formate is provided by PurU via hydrolysis of 10-formyl-tetrahydrofolate. The protein is Formate-dependent phosphoribosylglycinamide formyltransferase of Bordetella avium (strain 197N).